A 136-amino-acid chain; its full sequence is MVKLGFVIAEFNRDITFMMEKLADEHAEFLGAEVPYKVMVPGVYDMPVPIKRLLEKEDVDAVITIGCVIEGDTEHDEIVVHNAARKITDLSLQYDKPVALGISGPGMTRMQAERRIDYGRKAVESAVKMVKRLNDL.

Residues F11, 43–45 (VYD), and 67–69 (CVI) contribute to the 5-amino-6-(D-ribitylamino)uracil site. 72–73 (DT) is a (2S)-2-hydroxy-3-oxobutyl phosphate binding site. The Proton donor role is filled by H75. Position 100 (L100) interacts with 5-amino-6-(D-ribitylamino)uracil. R115 is a binding site for (2S)-2-hydroxy-3-oxobutyl phosphate.

This sequence belongs to the DMRL synthase family. As to quaternary structure, forms an icosahedral capsid composed of 60 subunits, arranged as a dodecamer of pentamers.

The catalysed reaction is (2S)-2-hydroxy-3-oxobutyl phosphate + 5-amino-6-(D-ribitylamino)uracil = 6,7-dimethyl-8-(1-D-ribityl)lumazine + phosphate + 2 H2O + H(+). It functions in the pathway cofactor biosynthesis; riboflavin biosynthesis; riboflavin from 2-hydroxy-3-oxobutyl phosphate and 5-amino-6-(D-ribitylamino)uracil: step 1/2. In terms of biological role, catalyzes the formation of 6,7-dimethyl-8-ribityllumazine by condensation of 5-amino-6-(D-ribitylamino)uracil with 3,4-dihydroxy-2-butanone 4-phosphate. This is the penultimate step in the biosynthesis of riboflavin. This chain is 6,7-dimethyl-8-ribityllumazine synthase, found in Methanococcus aeolicus (strain ATCC BAA-1280 / DSM 17508 / OCM 812 / Nankai-3).